A 383-amino-acid chain; its full sequence is MSSYLFTSESVSEGHPDKIADQISDAVLDEILKQDPKARVACETYVKTGMALVGGEITTSAWVDIEYIARQVICDIGYTSSEMGFDGHSCAVLNGIGKQSSDINQGVDRDDPLNQGAGDQGIMFGYATNETEVLMPAAITYAHRLMERQAWVRKNGTLPWLRPDAKSQVTLKYENNKIVGVDAVVLSTQHSDSVTQEDLHEAVMEEIIKPVLPAKWLSKDTKYFINPTGRFVIGGPMGDCGLTGRKIIVDTYGGAARHGGGAFSGKDPSKVDRSAAYAARYVAKNIVAAGLADRCEIQLSYAIGVAEPTSIMVETFGTGKVADELLVALVREHFDLRPYGLIKMLDLIKPIYRETAAYGHFGREQFPWEKTDRAAELKAAAGL.

His15 lines the ATP pocket. Asp17 is a binding site for Mg(2+). Glu43 provides a ligand contact to K(+). Residues Glu56 and Gln99 each coordinate L-methionine. Residues 99-109 (QSSDINQGVDR) are flexible loop. Residues 164 to 166 (DAK), 230 to 231 (RF), Asp239, 245 to 246 (RK), Ala262, and Lys266 each bind ATP. Asp239 serves as a coordination point for L-methionine. Lys270 lines the L-methionine pocket.

The protein belongs to the AdoMet synthase family. As to quaternary structure, homotetramer; dimer of dimers. It depends on Mg(2+) as a cofactor. The cofactor is K(+).

It localises to the cytoplasm. It carries out the reaction L-methionine + ATP + H2O = S-adenosyl-L-methionine + phosphate + diphosphate. The protein operates within amino-acid biosynthesis; S-adenosyl-L-methionine biosynthesis; S-adenosyl-L-methionine from L-methionine: step 1/1. In terms of biological role, catalyzes the formation of S-adenosylmethionine (AdoMet) from methionine and ATP. The overall synthetic reaction is composed of two sequential steps, AdoMet formation and the subsequent tripolyphosphate hydrolysis which occurs prior to release of AdoMet from the enzyme. The polypeptide is S-adenosylmethionine synthase (Mannheimia succiniciproducens (strain KCTC 0769BP / MBEL55E)).